A 155-amino-acid polypeptide reads, in one-letter code: SsrA-binding protein (155 aa).

Residues 135–155 (KRQDIKQRDVERETRREIMRH) form a disordered region.

The protein belongs to the SmpB family.

Its subcellular location is the cytoplasm. In terms of biological role, required for rescue of stalled ribosomes mediated by trans-translation. Binds to transfer-messenger RNA (tmRNA), required for stable association of tmRNA with ribosomes. tmRNA and SmpB together mimic tRNA shape, replacing the anticodon stem-loop with SmpB. tmRNA is encoded by the ssrA gene; the 2 termini fold to resemble tRNA(Ala) and it encodes a 'tag peptide', a short internal open reading frame. During trans-translation Ala-aminoacylated tmRNA acts like a tRNA, entering the A-site of stalled ribosomes, displacing the stalled mRNA. The ribosome then switches to translate the ORF on the tmRNA; the nascent peptide is terminated with the 'tag peptide' encoded by the tmRNA and targeted for degradation. The ribosome is freed to recommence translation, which seems to be the essential function of trans-translation. The polypeptide is SsrA-binding protein (Oleidesulfovibrio alaskensis (strain ATCC BAA-1058 / DSM 17464 / G20) (Desulfovibrio alaskensis)).